The sequence spans 288 residues: Acetyl-coenzyme A carboxylase carboxyl transferase subunit beta (288 aa).

Residues 34–288 enclose the CoA carboxyltransferase N-terminal domain; that stretch reads LFAKCPACKH…HLVAFHGGGQ (255 aa). Residues Cys38, Cys41, Cys56, and Cys59 each contribute to the Zn(2+) site. The segment at 38–59 adopts a C4-type zinc-finger fold; sequence CPACKHMIYKKDLGLAKICPTC.

The protein belongs to the AccD/PCCB family. Acetyl-CoA carboxylase is a heterohexamer composed of biotin carboxyl carrier protein (AccB), biotin carboxylase (AccC) and two subunits each of ACCase subunit alpha (AccA) and ACCase subunit beta (AccD). Requires Zn(2+) as cofactor.

The protein localises to the cytoplasm. The catalysed reaction is N(6)-carboxybiotinyl-L-lysyl-[protein] + acetyl-CoA = N(6)-biotinyl-L-lysyl-[protein] + malonyl-CoA. Its pathway is lipid metabolism; malonyl-CoA biosynthesis; malonyl-CoA from acetyl-CoA: step 1/1. In terms of biological role, component of the acetyl coenzyme A carboxylase (ACC) complex. Biotin carboxylase (BC) catalyzes the carboxylation of biotin on its carrier protein (BCCP) and then the CO(2) group is transferred by the transcarboxylase to acetyl-CoA to form malonyl-CoA. In Streptococcus pyogenes serotype M28 (strain MGAS6180), this protein is Acetyl-coenzyme A carboxylase carboxyl transferase subunit beta.